The chain runs to 280 residues: MRKLGLIAGGGALPVELASHCEAAGRAFAVMRLRSFADPSLDRYPGADVGIGEFGKIFKALRAEGCDVVCFAGNVSRPDFSALMPDARGLKVLPSLIVAARKGDDALLRRVLDEFEKEGFEIEGAHEVMGEMTLPRGRLGKVSPAPEHMADIDKALDVAREIGRLDIGQGAVVCEGLVLAVEAQEGTDAMLRRVADLPEAIRGRAERRLGVLAKAPKPIQETRVDLPTIGVATIHRAARAGLAGIVGEAGRLLVVDREAVIAAADDLGLFVLGVDPQERP.

Residues A12, 74 to 75, Q169, 187 to 188, K214, and 226 to 233 contribute to the substrate site; these read NV, TD, and LPTIGVAT.

The protein belongs to the LpxI family. Homodimer. It depends on Mg(2+) as a cofactor.

Its subcellular location is the cell inner membrane. It carries out the reaction UDP-2-N,3-O-bis[(3R)-3-hydroxytetradecanoyl]-alpha-D-glucosamine + H2O = 2-N,3-O-bis[(3R)-3-hydroxytetradecanoyl]-alpha-D-glucosaminyl 1-phosphate + UMP + 2 H(+). Its pathway is glycolipid biosynthesis; lipid IV(A) biosynthesis; lipid IV(A) from (3R)-3-hydroxytetradecanoyl-[acyl-carrier-protein] and UDP-N-acetyl-alpha-D-glucosamine: step 4/6. Its activity is regulated as follows. Inhibited by high concentrations of Cu(2+) and Zn(2+). Completely inhibited by EDTA in vitro. Its function is as follows. Hydrolyzes the pyrophosphate bond of UDP-2,3-diacylglucosamine to form 2,3-diacylglucosamine 1-phosphate (lipid X) and UMP by catalyzing the attack of water at the beta-P atom. Involved in the biosynthesis of lipid A, a phosphorylated glycolipid that anchors the lipopolysaccharide to the outer membrane of the cell. Can functionally complement lpxH deficiency in E.coli. Cannot use CDP-diacylglycerol as substrate. The sequence is that of UDP-2,3-diacylglucosamine pyrophosphatase LpxI from Caulobacter vibrioides (strain ATCC 19089 / CIP 103742 / CB 15) (Caulobacter crescentus).